The sequence spans 528 residues: Peptide chain release factor 3 (528 aa).

Residues 11–279 enclose the tr-type G domain; it reads EKRRTFAIIS…GLVEWAPKPL (269 aa). Residues 20–27, 88–92, and 142–145 contribute to the GTP site; these read SHPDAGKT, DTPGH, and NKCD.

This sequence belongs to the TRAFAC class translation factor GTPase superfamily. Classic translation factor GTPase family. PrfC subfamily.

It is found in the cytoplasm. Increases the formation of ribosomal termination complexes and stimulates activities of RF-1 and RF-2. It binds guanine nucleotides and has strong preference for UGA stop codons. It may interact directly with the ribosome. The stimulation of RF-1 and RF-2 is significantly reduced by GTP and GDP, but not by GMP. The sequence is that of Peptide chain release factor 3 from Psychromonas ingrahamii (strain DSM 17664 / CCUG 51855 / 37).